The chain runs to 375 residues: Erythronate-4-phosphate dehydrogenase (375 aa).

Residues Ser-45 and Thr-66 each contribute to the substrate site. Asp-146 and Thr-175 together coordinate NAD(+). Residue Arg-208 is part of the active site. Asp-232 provides a ligand contact to NAD(+). Glu-237 is a catalytic residue. His-254 acts as the Proton donor in catalysis. Gly-257 is a binding site for NAD(+). Residue Tyr-258 coordinates substrate.

The protein belongs to the D-isomer specific 2-hydroxyacid dehydrogenase family. PdxB subfamily. As to quaternary structure, homodimer.

The protein localises to the cytoplasm. The enzyme catalyses 4-phospho-D-erythronate + NAD(+) = (R)-3-hydroxy-2-oxo-4-phosphooxybutanoate + NADH + H(+). Its pathway is cofactor biosynthesis; pyridoxine 5'-phosphate biosynthesis; pyridoxine 5'-phosphate from D-erythrose 4-phosphate: step 2/5. Functionally, catalyzes the oxidation of erythronate-4-phosphate to 3-hydroxy-2-oxo-4-phosphonooxybutanoate. The protein is Erythronate-4-phosphate dehydrogenase of Yersinia pseudotuberculosis serotype O:1b (strain IP 31758).